The following is a 140-amino-acid chain: uncharacterized protein (140 aa).

Its subcellular location is the mitochondrion. This is an uncharacterized protein from Homo sapiens (Human).